The chain runs to 60 residues: MDHRLLEIVACPVCNGRLYFNKEKLELICKADGLAYPVRDGIPVLLENEARKLGADEITQ.

Belongs to the UPF0434 family.

The protein is UPF0434 protein ECA2555 of Pectobacterium atrosepticum (strain SCRI 1043 / ATCC BAA-672) (Erwinia carotovora subsp. atroseptica).